The primary structure comprises 210 residues: MRDPVETYMNLVPMVVEQTNRGERAYDIFSRLLKERIIFVTGPVEDGMSTLTVAQLLFLEAENPKKEISMYINSPGGVVTSGLAIYDTMQFIRPPVSTLCTGQAASMGSLLLAAGHPDMRFSLPNSRIMVHQPSGGFQGQATDIMLHAQEILNLKKRLNEIYVKHTGQTYKAIEDALERDKFLTADMARDFGIVDKVIDKRSEEPTPKAP.

Ser106 (nucleophile) is an active-site residue. The active site involves His131.

It belongs to the peptidase S14 family. Fourteen ClpP subunits assemble into 2 heptameric rings which stack back to back to give a disk-like structure with a central cavity, resembling the structure of eukaryotic proteasomes.

It localises to the cytoplasm. It carries out the reaction Hydrolysis of proteins to small peptides in the presence of ATP and magnesium. alpha-casein is the usual test substrate. In the absence of ATP, only oligopeptides shorter than five residues are hydrolyzed (such as succinyl-Leu-Tyr-|-NHMec, and Leu-Tyr-Leu-|-Tyr-Trp, in which cleavage of the -Tyr-|-Leu- and -Tyr-|-Trp bonds also occurs).. Its function is as follows. Cleaves peptides in various proteins in a process that requires ATP hydrolysis. Has a chymotrypsin-like activity. Plays a major role in the degradation of misfolded proteins. The sequence is that of ATP-dependent Clp protease proteolytic subunit from Rhodopseudomonas palustris (strain BisB18).